The chain runs to 435 residues: Chromosomal replication initiator protein DnaA (435 aa).

The interval 1–70 (MNIGEKILLL…KHLFEIQNSI (70 aa)) is domain I, interacts with DnaA modulators. The domain II stretch occupies residues 70 to 98 (IKVDVSILLKNQVESKKAEQKSVQKQQHS). The domain III, AAA+ region stretch occupies residues 99–313 (LLNPSHTFEN…GILSKLHAYS (215 aa)). ATP contacts are provided by Gly-143, Gly-145, Lys-146, and Thr-147. The segment at 314-435 (QLMHVDIDLQ…ELTNKITSSS (122 aa)) is domain IV, binds dsDNA.

The protein belongs to the DnaA family. In terms of assembly, oligomerizes as a right-handed, spiral filament on DNA at oriC.

The protein resides in the cytoplasm. Plays an essential role in the initiation and regulation of chromosomal replication. ATP-DnaA binds to the origin of replication (oriC) to initiate formation of the DNA replication initiation complex once per cell cycle. Binds the DnaA box (a 9 base pair repeat at the origin) and separates the double-stranded (ds)DNA. Forms a right-handed helical filament on oriC DNA; dsDNA binds to the exterior of the filament while single-stranded (ss)DNA is stabiized in the filament's interior. The ATP-DnaA-oriC complex binds and stabilizes one strand of the AT-rich DNA unwinding element (DUE), permitting loading of DNA polymerase. After initiation quickly degrades to an ADP-DnaA complex that is not apt for DNA replication. Binds acidic phospholipids. The chain is Chromosomal replication initiator protein DnaA from Sulfurimonas denitrificans (strain ATCC 33889 / DSM 1251) (Thiomicrospira denitrificans (strain ATCC 33889 / DSM 1251)).